The primary structure comprises 233 residues: Nickel import system ATP-binding protein NikE (233 aa).

The 227-residue stretch at 2–228 folds into the ABC transporter domain; the sequence is IELKHVTFGY…DRHPYTKELV (227 aa). 35–42 contacts ATP; that stretch reads GESGCGKS.

Belongs to the ABC transporter superfamily. As to quaternary structure, the complex is composed of two ATP-binding proteins (NikD and NikE), two transmembrane proteins (NikB and NikC) and a solute-binding protein (NikA).

It localises to the cell membrane. It catalyses the reaction Ni(2+)(out) + ATP + H2O = Ni(2+)(in) + ADP + phosphate + H(+). Part of the ABC transporter complex NikABCDE (Opp2) involved in nickel import. Probably responsible for energy coupling to the transport system. This Staphylococcus aureus (strain Mu50 / ATCC 700699) protein is Nickel import system ATP-binding protein NikE.